Reading from the N-terminus, the 1133-residue chain is Protein cordon-bleu (1133 aa).

The segment covering methionine 1–lysine 11 has biased composition (pro residues). The segment at methionine 1–histidine 25 is disordered. A phosphoserine mark is found at serine 31, serine 34, serine 196, serine 219, serine 256, and serine 278. Disordered stretches follow at residues alanine 246–glycine 393 and glutamine 442–serine 568. The span at cysteine 272–serine 301 shows a compositional bias: polar residues. A KKRRAP 1 motif is present at residues lysine 307–proline 312. Serine 330 and serine 333 each carry phosphoserine. The KKRRAP 2 signature appears at lysine 340–proline 345. Residues proline 345–valine 358 are compositionally biased toward pro residues. Phosphoserine is present on serine 356. Residues asparagine 361 to lysine 371 are compositionally biased toward basic and acidic residues. Polar residues-rich tracts occupy residues threonine 382–glycine 393 and glutamine 442–isoleucine 464. Serine 447 carries the post-translational modification Phosphoserine. Residues serine 512–methionine 524 show a composition bias toward basic and acidic residues. Serine 614 carries the phosphoserine modification. The tract at residues alanine 664–valine 720 is disordered. Composition is skewed to polar residues over residues proline 665–glutamate 674 and threonine 686–serine 696. Position 924 is a phosphoserine (serine 924). Disordered regions lie at residues proline 942–phenylalanine 961 and histidine 990–alanine 1018. 2 consecutive WH2 domains span residues leucine 981–threonine 1001 and glutamate 1021–valine 1041. Positions glycine 993–proline 1010 are enriched in basic and acidic residues. The tract at residues aspartate 1063 to alanine 1091 is disordered. Pro residues predominate over residues leucine 1072–threonine 1083. At serine 1099 the chain carries Phosphoserine. One can recognise a WH2 3 domain in the interval alanine 1109–valine 1129.

As to quaternary structure, identified in a complex composed of ACTA1, COBL, GSN AND TMSB4X. Identified in a complex composed of COBL, PACSIN1 and WASL. Interacts with PACSIN1, PACSIN2 and PACSIN3. Interacts (via WH2 domains) with actin monomers. Interacts with both PACSIN1 and DBNL. As to expression, detected in brain (at protein level).

It localises to the cell membrane. Its subcellular location is the cytoplasm. The protein resides in the cytoskeleton. It is found in the cell projection. The protein localises to the ruffle. It localises to the cytosol. Functionally, plays an important role in the reorganization of the actin cytoskeleton. Binds to and sequesters actin monomers (G actin). Nucleates actin polymerization by assembling three actin monomers in cross-filament orientation and thereby promotes growth of actin filaments at the barbed end. Can also mediate actin depolymerization at barbed ends and severing of actin filaments. Promotes formation of cell ruffles. Regulates dendrite branching in Purkinje cells. Regulates neuron morphogenesis and increases branching of axons and dendrites. In Rattus norvegicus (Rat), this protein is Protein cordon-bleu (Cobl).